The sequence spans 704 residues: Vacuolar fusion protein CCZ1 (704 aa).

The segment at 281–322 (LQVEEEQERSRDTNGRDEEESQEQQRREHQETTQNNTSELSL) is disordered.

Belongs to the CCZ1 family. As to quaternary structure, forms a complex with MON1. Interacts with YPT7. Interacts with YPT10 with a strong preference for the GTP-associated form; may interact with other small GTPase Rab5 homologs but at much lower levels.

It localises to the endosome. It is found in the multivesicular body membrane. Its subcellular location is the prevacuolar compartment membrane. The protein localises to the vacuole membrane. The protein resides in the vesicle. Its activity is regulated as follows. The YPT7 guanine nucleotide-exchange factor (GEF) activity of the MON1-CCZ1 complex is autoinhibited by the N-terminal disordered region of MON1. In terms of biological role, in complex with MON1, is required for multiple vacuole delivery pathways including the cytoplasm to vacuole transport (Cvt), autophagy, pexophagy and endocytosis. The MON1-CCZ1 complex acts at the fusion of vesicles with the vacuole, through its regulation of the SNARE complex during the coordinated priming and docking stages of fusion, and particularly at the stage of tethering/docking. The MON1-CCZ1 complex is recruited to membranes enriched in charged lipids, particularly phosphatidylinositol 3-phosphate (PtdIns3P), by GTP-associated small GTPase RAB5 homologs (YPT10, YPT52, YPT53 and VPS21). The MON1-CCZ1 complex recruits GDP-associated small GTPase YPT7 to membranes and acts as a guanine nucleotide-exchange factor (GEF), promoting nucleotide exchange on YPT7 and triggering endosomal maturation by recruiting downstream effectors such as components of the HOPS tethering complex. The polypeptide is Vacuolar fusion protein CCZ1 (CCZ1) (Saccharomyces cerevisiae (strain ATCC 204508 / S288c) (Baker's yeast)).